A 35-amino-acid chain; its full sequence is MEALVYTFLLVSTLGIIFFAIFFREPPKVPDKGSK.

The helical transmembrane segment at 3-23 (ALVYTFLLVSTLGIIFFAIFF) threads the bilayer.

This sequence belongs to the PsbT family. In terms of assembly, PSII is composed of 1 copy each of membrane proteins PsbA, PsbB, PsbC, PsbD, PsbE, PsbF, PsbH, PsbI, PsbJ, PsbK, PsbL, PsbM, PsbT, PsbY, PsbZ, Psb30/Ycf12, at least 3 peripheral proteins of the oxygen-evolving complex and a large number of cofactors. It forms dimeric complexes.

Its subcellular location is the plastid. The protein localises to the chloroplast thylakoid membrane. Its function is as follows. Found at the monomer-monomer interface of the photosystem II (PS II) dimer, plays a role in assembly and dimerization of PSII. PSII is a light-driven water plastoquinone oxidoreductase, using light energy to abstract electrons from H(2)O, generating a proton gradient subsequently used for ATP formation. The protein is Photosystem II reaction center protein T of Cycas revoluta (Sago palm).